Reading from the N-terminus, the 265-residue chain is Apolipoprotein A-I (265 aa).

A signal peptide spans 1–18; sequence MKAVVLTLAVLFLTGSQA. A run of 2 repeats spans residues 67-88 and 89-110. Residues 67 to 265 form a 10 X approximate tandem repeats region; the sequence is LKLVDNWDTL…IDEAAKKLTA (199 aa). A 3; half-length repeat occupies 111–121; sequence KDLEDVRQKTQ. Tandem repeats lie at residues 122-143, 144-165, 166-187, 188-209, and 210-231. Residue Met193 is modified to Methionine sulfoxide. Residues 232–242 form a 9; half-length repeat; it reads PVLEDIHQGLM. Residues Met242 and Met244 each carry the methionine sulfoxide modification. Residues 243 to 265 form repeat 10; sequence PMWESFKTGVLNVIDEAAKKLTA.

It belongs to the apolipoprotein A1/A4/E family. As to quaternary structure, homodimer. Interacts with APOA1BP and CLU. Component of a sperm activating protein complex (SPAP), consisting of APOA1, an immunoglobulin heavy chain, an immunoglobulin light chain and albumin. Interacts with NDRG1. Interacts with SCGB3A2. Interacts with NAXE and YJEFN3. Post-translationally, glycosylated. Palmitoylated. In terms of processing, phosphorylation sites are present in the extracellular medium. As to expression, major protein of plasma HDL, also found in chylomicrons.

Its subcellular location is the secreted. Participates in the reverse transport of cholesterol from tissues to the liver for excretion by promoting cholesterol efflux from tissues and by acting as a cofactor for the lecithin cholesterol acyltransferase (LCAT). As part of the SPAP complex, activates spermatozoa motility. The sequence is that of Apolipoprotein A-I (APOA1) from Tupaia belangeri (Common tree shrew).